The sequence spans 217 residues: Protein OPI10 homolog (217 aa).

Belongs to the OPI10 family.

The protein is Protein OPI10 homolog of Dictyostelium discoideum (Social amoeba).